A 153-amino-acid polypeptide reads, in one-letter code: ATP synthase subunit b' (153 aa).

The helical transmembrane segment at 23 to 40 threads the bilayer; sequence LMAIQVVALTYILNSLFF.

The protein belongs to the ATPase B chain family. As to quaternary structure, F-type ATPases have 2 components, F(1) - the catalytic core - and F(0) - the membrane proton channel. F(1) has five subunits: alpha(3), beta(3), gamma(1), delta(1), epsilon(1). F(0) has four main subunits: a(1), b(1), b'(1) and c(10-14). The alpha and beta chains form an alternating ring which encloses part of the gamma chain. F(1) is attached to F(0) by a central stalk formed by the gamma and epsilon chains, while a peripheral stalk is formed by the delta, b and b' chains.

Its subcellular location is the cellular thylakoid membrane. F(1)F(0) ATP synthase produces ATP from ADP in the presence of a proton or sodium gradient. F-type ATPases consist of two structural domains, F(1) containing the extramembraneous catalytic core and F(0) containing the membrane proton channel, linked together by a central stalk and a peripheral stalk. During catalysis, ATP synthesis in the catalytic domain of F(1) is coupled via a rotary mechanism of the central stalk subunits to proton translocation. Its function is as follows. Component of the F(0) channel, it forms part of the peripheral stalk, linking F(1) to F(0). The b'-subunit is a diverged and duplicated form of b found in plants and photosynthetic bacteria. This Prochlorococcus marinus (strain AS9601) protein is ATP synthase subunit b'.